Reading from the N-terminus, the 343-residue chain is Protein RecA (343 aa).

An ATP-binding site is contributed by 66–73 (GPESSGKT).

Belongs to the RecA family.

The protein localises to the cytoplasm. In terms of biological role, can catalyze the hydrolysis of ATP in the presence of single-stranded DNA, the ATP-dependent uptake of single-stranded DNA by duplex DNA, and the ATP-dependent hybridization of homologous single-stranded DNAs. It interacts with LexA causing its activation and leading to its autocatalytic cleavage. The polypeptide is Protein RecA (Rickettsia bellii (strain RML369-C)).